We begin with the raw amino-acid sequence, 106 residues long: Transcription initiation factor IIA subunit 2 (106 aa).

It belongs to the TFIIA subunit 2 family. In terms of assembly, TFIIA is a heterodimer of the large unprocessed subunit 1 and a small subunit gamma. It was originally believed to be a heterotrimer of an alpha, a beta and a gamma subunit.

The protein resides in the nucleus. TFIIA is a component of the transcription machinery of RNA polymerase II and plays an important role in transcriptional activation. TFIIA in a complex with TBP mediates transcriptional activity. The chain is Transcription initiation factor IIA subunit 2 (TFIIA-S) from Arabidopsis thaliana (Mouse-ear cress).